Here is a 75-residue protein sequence, read N- to C-terminus: UPF0270 protein PFL_4336 (75 aa).

Belongs to the UPF0270 family.

The sequence is that of UPF0270 protein PFL_4336 from Pseudomonas fluorescens (strain ATCC BAA-477 / NRRL B-23932 / Pf-5).